A 202-amino-acid chain; its full sequence is Holliday junction resolvase RecU (202 aa).

Positions 85, 87, 100, and 119 each coordinate Mg(2+).

It belongs to the RecU family. Mg(2+) is required as a cofactor.

It is found in the cytoplasm. It catalyses the reaction Endonucleolytic cleavage at a junction such as a reciprocal single-stranded crossover between two homologous DNA duplexes (Holliday junction).. Functionally, endonuclease that resolves Holliday junction intermediates in genetic recombination. Cleaves mobile four-strand junctions by introducing symmetrical nicks in paired strands. Promotes annealing of linear ssDNA with homologous dsDNA. Required for DNA repair, homologous recombination and chromosome segregation. The polypeptide is Holliday junction resolvase RecU (Streptococcus equi subsp. zooepidemicus (strain H70)).